The primary structure comprises 517 residues: Beta-glucosidase 1 (517 aa).

A signal peptide spans 1 to 22 (MEDVLTLITMIVLLLLAFHGFG). A beta-D-glucoside-binding positions include glutamine 48, histidine 145, and 190-191 (NE). Glutamate 191 serves as the catalytic Proton donor. Cysteine 210 and cysteine 217 are oxidised to a cystine. N-linked (GlcNAc...) asparagine glycosylation is found at asparagine 216 and asparagine 221. A beta-D-glucoside contacts are provided by tyrosine 333 and glutamate 406. Residue glutamate 406 is the Nucleophile of the active site. N-linked (GlcNAc...) asparagine glycosylation is present at asparagine 441. Residues tryptophan 451 and phenylalanine 467 each contribute to the a beta-D-glucoside site. Asparagine 473 and asparagine 512 each carry an N-linked (GlcNAc...) asparagine glycan.

Belongs to the glycosyl hydrolase 1 family.

The enzyme catalyses Hydrolysis of terminal, non-reducing beta-D-glucosyl residues with release of beta-D-glucose.. This Arabidopsis thaliana (Mouse-ear cress) protein is Beta-glucosidase 1.